The sequence spans 337 residues: Mortality factor related protein 1 (337 aa).

The Tudor-knot domain occupies Phe-7–Pro-55. A disordered region spans residues His-75–Lys-113. The 206-residue stretch at Thr-122 to Leu-327 folds into the MRG domain.

As to quaternary structure, component of the SIN3S complex, which contains at least sin-3, hda-1, athp-1 and mrg-1. Interacts with cfp-1, a component of the SET2 complex. Interacts with rfp-1. As to expression, expressed in oocytes (at protein level). Expressed mainly in germ cells, but also at lower levels in several somatic cell types, including intestinal cells.

It localises to the nucleus. Its subcellular location is the chromosome. In terms of biological role, protein involved in the remodeling of chromatin thereby regulating various processes including transcription, chromosome synapsis and genome integrity. Mainly binds genomic loci carrying trimethylated histone H3 'Lys-36' (H3K36me3) or 'Lys-4' (H3K4me3), and acetylated histone H3 'Lys-9' (H3K9ac), 'Lys-27' (H3K27ac). During meiosis, required for the presynaptic pairing of homologous chromosomal regions outside of the pairing center and for the progression of chromosome synapsis. Essential maternal factor required in postembryonic germline development and in maintaining germ cell identity. Plays an important role in maintaining genomic integrity in primordial germ cells (PGCs) during meiosis by regulating DNA double-strand break (DSB) repair and synapsis. Also, required for chromatin-based transcriptional silencing in PGCs and for silencing of X-linked genes in the maternal germ line. By retaining histone acetyltransferase, cbp-1, in euchromatin, promotes the anchoring of heterochromatin at the inner nuclear membrane in intestinal and hypodermal cells. This chain is Mortality factor related protein 1, found in Caenorhabditis elegans.